Reading from the N-terminus, the 430-residue chain is UDP-N-acetylmuramoylalanine--D-glutamate ligase (430 aa).

An ATP-binding site is contributed by 109–115; sequence GTDGKST.

Belongs to the MurCDEF family.

The protein localises to the cytoplasm. The enzyme catalyses UDP-N-acetyl-alpha-D-muramoyl-L-alanine + D-glutamate + ATP = UDP-N-acetyl-alpha-D-muramoyl-L-alanyl-D-glutamate + ADP + phosphate + H(+). Its pathway is cell wall biogenesis; peptidoglycan biosynthesis. Cell wall formation. Catalyzes the addition of glutamate to the nucleotide precursor UDP-N-acetylmuramoyl-L-alanine (UMA). In Thermotoga sp. (strain RQ2), this protein is UDP-N-acetylmuramoylalanine--D-glutamate ligase.